Reading from the N-terminus, the 359-residue chain is 3-dehydroquinate synthase (359 aa).

NAD(+) is bound by residues 71–76, 105–109, 129–130, lysine 142, and lysine 151; these read DAEAAK, GAVTD, and TT. Residues glutamate 184, histidine 247, and histidine 263 each coordinate Zn(2+).

The protein belongs to the sugar phosphate cyclases superfamily. Dehydroquinate synthase family. It depends on NAD(+) as a cofactor. Requires Co(2+) as cofactor. The cofactor is Zn(2+).

It is found in the cytoplasm. It catalyses the reaction 7-phospho-2-dehydro-3-deoxy-D-arabino-heptonate = 3-dehydroquinate + phosphate. It participates in metabolic intermediate biosynthesis; chorismate biosynthesis; chorismate from D-erythrose 4-phosphate and phosphoenolpyruvate: step 2/7. In terms of biological role, catalyzes the conversion of 3-deoxy-D-arabino-heptulosonate 7-phosphate (DAHP) to dehydroquinate (DHQ). This is 3-dehydroquinate synthase from Leifsonia xyli subsp. xyli (strain CTCB07).